A 468-amino-acid chain; its full sequence is Protein CA_C1420 (468 aa).

The segment at 1–289 (MSLNGFYLLP…LKELERIRKD (289 aa)) is unknown. Residues 296–468 (QEKDPYVKLA…KFMVTRHKES (173 aa)) enclose the AMMECR1 domain.

This is Protein CA_C1420 from Clostridium acetobutylicum (strain ATCC 824 / DSM 792 / JCM 1419 / IAM 19013 / LMG 5710 / NBRC 13948 / NRRL B-527 / VKM B-1787 / 2291 / W).